A 147-amino-acid polypeptide reads, in one-letter code: Putative acetyltransferase BSU40680 (147 aa).

The N-acetyltransferase domain occupies 1 to 144; that stretch reads MNVKKITSEQ…PHVLMTKQDD (144 aa). CoA-binding positions include 74–76 and 115–117; these read ICI and GFY.

Belongs to the UPF0039 (ElaA) family.

In terms of biological role, could catalyze the transfer of an acetyl group from acetyl coenzyme A (AcCoA) to an acceptor substrate and release both CoA and the acetylated product. The sequence is that of Putative acetyltransferase BSU40680 (yybD) from Bacillus subtilis (strain 168).